We begin with the raw amino-acid sequence, 381 residues long: Queuine tRNA-ribosyltransferase (381 aa).

D89 serves as the catalytic Proton acceptor. Residues D89–F93, D143, Q187, and G214 each bind substrate. The tract at residues G245–D251 is RNA binding. D264 (nucleophile) is an active-site residue. Residues T269–R273 are RNA binding; important for wobble base 34 recognition. 4 residues coordinate Zn(2+): C302, C304, C307, and H333.

It belongs to the queuine tRNA-ribosyltransferase family. In terms of assembly, homodimer. Within each dimer, one monomer is responsible for RNA recognition and catalysis, while the other monomer binds to the replacement base PreQ1. Zn(2+) is required as a cofactor.

The catalysed reaction is 7-aminomethyl-7-carbaguanine + guanosine(34) in tRNA = 7-aminomethyl-7-carbaguanosine(34) in tRNA + guanine. Its pathway is tRNA modification; tRNA-queuosine biosynthesis. Catalyzes the base-exchange of a guanine (G) residue with the queuine precursor 7-aminomethyl-7-deazaguanine (PreQ1) at position 34 (anticodon wobble position) in tRNAs with GU(N) anticodons (tRNA-Asp, -Asn, -His and -Tyr). Catalysis occurs through a double-displacement mechanism. The nucleophile active site attacks the C1' of nucleotide 34 to detach the guanine base from the RNA, forming a covalent enzyme-RNA intermediate. The proton acceptor active site deprotonates the incoming PreQ1, allowing a nucleophilic attack on the C1' of the ribose to form the product. After dissociation, two additional enzymatic reactions on the tRNA convert PreQ1 to queuine (Q), resulting in the hypermodified nucleoside queuosine (7-(((4,5-cis-dihydroxy-2-cyclopenten-1-yl)amino)methyl)-7-deazaguanosine). This is Queuine tRNA-ribosyltransferase from Pectobacterium atrosepticum (strain SCRI 1043 / ATCC BAA-672) (Erwinia carotovora subsp. atroseptica).